We begin with the raw amino-acid sequence, 141 residues long: uncharacterized protein (141 aa).

A helical transmembrane segment spans residues Pro13 to Val35.

It is found in the membrane. This is an uncharacterized protein from Archaeoglobus fulgidus (strain ATCC 49558 / DSM 4304 / JCM 9628 / NBRC 100126 / VC-16).